Reading from the N-terminus, the 370-residue chain is Anthranilate phosphoribosyltransferase (370 aa).

Positions 1–27 (MALSAEGSSGGSRGGSPKAEAASVPSW) are disordered. 5-phospho-alpha-D-ribose 1-diphosphate is bound by residues G107, 110–111 (GD), T115, 117–120 (NLST), 135–143 (KHGNRAASS), and G147. G107 lines the anthranilate pocket. A Mg(2+)-binding site is contributed by S119. N138 serves as a coordination point for anthranilate. Residue R193 coordinates anthranilate. The Mg(2+) site is built by D251 and E252.

This sequence belongs to the anthranilate phosphoribosyltransferase family. Homodimer. Mg(2+) serves as cofactor.

The catalysed reaction is N-(5-phospho-beta-D-ribosyl)anthranilate + diphosphate = 5-phospho-alpha-D-ribose 1-diphosphate + anthranilate. It functions in the pathway amino-acid biosynthesis; L-tryptophan biosynthesis; L-tryptophan from chorismate: step 2/5. Catalyzes the transfer of the phosphoribosyl group of 5-phosphorylribose-1-pyrophosphate (PRPP) to anthranilate to yield N-(5'-phosphoribosyl)-anthranilate (PRA). The chain is Anthranilate phosphoribosyltransferase from Mycobacterium bovis (strain ATCC BAA-935 / AF2122/97).